The chain runs to 163 residues: 3-isopropylmalate dehydratase small subunit (163 aa).

Belongs to the LeuD family. LeuD type 2 subfamily. Heterodimer of LeuC and LeuD.

The enzyme catalyses (2R,3S)-3-isopropylmalate = (2S)-2-isopropylmalate. Its pathway is amino-acid biosynthesis; L-leucine biosynthesis; L-leucine from 3-methyl-2-oxobutanoate: step 2/4. Catalyzes the isomerization between 2-isopropylmalate and 3-isopropylmalate, via the formation of 2-isopropylmaleate. The chain is 3-isopropylmalate dehydratase small subunit from Endomicrobium trichonymphae.